Reading from the N-terminus, the 37-residue chain is MSGYSNGGGYGGISSFALIVVLFILLIIVGTAFVGGF.

The helical transmembrane segment at 16-36 threads the bilayer; the sequence is FALIVVLFILLIIVGTAFVGG.

It belongs to the SscA family.

Its subcellular location is the membrane. This is an uncharacterized protein from Bacillus subtilis (strain 168).